The following is a 214-amino-acid chain: Putative AgrB-like protein (214 aa).

A run of 5 helical transmembrane segments spans residues 41–61 (IISV…LIFL), 82–102 (CTLL…SSFF), 109–129 (IIVF…FKFA), 154–174 (ILTI…NLGW), and 182–202 (LSII…GNIL).

It belongs to the AgrB family.

It localises to the cell membrane. In terms of biological role, may be involved in the proteolytic processing of a quorum sensing system signal molecule precursor. This chain is Putative AgrB-like protein, found in Clostridium perfringens (strain SM101 / Type A).